A 344-amino-acid polypeptide reads, in one-letter code: MDFLVLFLFYLASVLMGLVLICVCSKTHSLKGLARGGAQIFSCIIPECLQRAVHGLLHYLFHTRNHTFIVLHLVLQGMVYTEYTWEVFGYCQELELSLHYLLLPYLLLGVNLFFFTLTCGTNPGIITKANELLFLHVYEFDEVMFPKNVRCSTCDLRKPARSKHCSVCNWCVHRFDHHCVWVNNCIGAWNIRYFLIYVLTLTASAATVAIVSTTFLVHLVVMSDLYQETYIDDLGHLHVMDTVFLIQYLFLTFPRIVFMLGFVVVLSFLLGGYLLFVLYLAATNQTTNEWYRGDWAWCQRCPLVAWPPSAEPQVHRNIHSHGLRSNLQEIFLPAFPCHERKKQE.

The Lumenal portion of the chain corresponds to 1–2; sequence MD. A helical membrane pass occupies residues 3–23; it reads FLVLFLFYLASVLMGLVLICV. Topologically, residues 24–67 are cytoplasmic; the sequence is CSKTHSLKGLARGGAQIFSCIIPECLQRAVHGLLHYLFHTRNHT. The helical transmembrane segment at 68 to 88 threads the bilayer; that stretch reads FIVLHLVLQGMVYTEYTWEVF. The Lumenal segment spans residues 89–99; sequence GYCQELELSLH. A helical transmembrane segment spans residues 100-120; the sequence is YLLLPYLLLGVNLFFFTLTCG. The Cytoplasmic segment spans residues 121–192; the sequence is TNPGIITKAN…NNCIGAWNIR (72 aa). A DHHC domain is found at 149–199; it reads VRCSTCDLRKPARSKHCSVCNWCVHRFDHHCVWVNNCIGAWNIRYFLIYVL. Residue Cys179 is the S-palmitoyl cysteine intermediate of the active site. A helical transmembrane segment spans residues 193-213; sequence YFLIYVLTLTASAATVAIVST. The Lumenal portion of the chain corresponds to 214–255; it reads TFLVHLVVMSDLYQETYIDDLGHLHVMDTVFLIQYLFLTFPR. Residues 256–276 traverse the membrane as a helical segment; sequence IVFMLGFVVVLSFLLGGYLLF. Residues 277-344 are Cytoplasmic-facing; that stretch reads VLYLAATNQT…FPCHERKKQE (68 aa). Residues 341 to 344 carry the Di-lysine motif motif; sequence KKQE.

The protein belongs to the DHHC palmitoyltransferase family. In terms of assembly, interacts with CPT1A.

The protein resides in the endoplasmic reticulum membrane. The protein localises to the golgi apparatus membrane. It localises to the cell membrane. It carries out the reaction L-cysteinyl-[protein] + hexadecanoyl-CoA = S-hexadecanoyl-L-cysteinyl-[protein] + CoA. In terms of biological role, palmitoyltransferase that catalyzes the addition of palmitate onto protein substrates including the D(2) dopamine receptor DRD2, GSK3B or MAVS. Mediates GSK3B palmitoylation to prevent its AKT1-mediated phosphorylation leading to activation of the STAT3 signaling pathway. Also catalyzes MAVS palmitoylation which promotes its stabilization and activation by inhibiting 'Lys-48'- but facilitating 'Lys-63'-linked ubiquitination. This chain is Palmitoyltransferase ZDHHC4, found in Homo sapiens (Human).